Consider the following 425-residue polypeptide: Glutamyl-tRNA(Gln) amidotransferase subunit D (425 aa).

The tract at residues 53–84 (ENNGEAANGGNGGKNGQKEPEPAKEKVSKPGL) is disordered. The segment covering 68–80 (GQKEPEPAKEKVS) has biased composition (basic and acidic residues). Positions 85–414 (PKVSILSTGG…EKAVSMLGEN (330 aa)) constitute an Asparaginase/glutaminase domain. Catalysis depends on residues Thr-95, Thr-171, Asp-172, and Lys-248.

Belongs to the asparaginase 1 family. GatD subfamily. In terms of assembly, heterodimer of GatD and GatE.

The catalysed reaction is L-glutamyl-tRNA(Gln) + L-glutamine + ATP + H2O = L-glutaminyl-tRNA(Gln) + L-glutamate + ADP + phosphate + H(+). Functionally, allows the formation of correctly charged Gln-tRNA(Gln) through the transamidation of misacylated Glu-tRNA(Gln) in organisms which lack glutaminyl-tRNA synthetase. The reaction takes place in the presence of glutamine and ATP through an activated gamma-phospho-Glu-tRNA(Gln). The GatDE system is specific for glutamate and does not act on aspartate. This chain is Glutamyl-tRNA(Gln) amidotransferase subunit D, found in Methanosarcina mazei (strain ATCC BAA-159 / DSM 3647 / Goe1 / Go1 / JCM 11833 / OCM 88) (Methanosarcina frisia).